We begin with the raw amino-acid sequence, 326 residues long: Pyruvate dehydrogenase E1 component subunit beta (326 aa).

Glu60 is a thiamine diphosphate binding site. Ile113, Ala161, Ile162, and Asn166 together coordinate K(+).

Heterodimer of an alpha and a beta chain. Thiamine diphosphate is required as a cofactor.

It localises to the plastid. The protein localises to the chloroplast. It carries out the reaction N(6)-[(R)-lipoyl]-L-lysyl-[protein] + pyruvate + H(+) = N(6)-[(R)-S(8)-acetyldihydrolipoyl]-L-lysyl-[protein] + CO2. Functionally, the pyruvate dehydrogenase complex catalyzes the overall conversion of pyruvate to acetyl-CoA and CO(2). It contains multiple copies of three enzymatic components: pyruvate dehydrogenase (E1), dihydrolipoamide acetyltransferase (E2) and lipoamide dehydrogenase (E3). This chain is Pyruvate dehydrogenase E1 component subunit beta (pdhB), found in Chaetosphaeridium globosum (Charophycean green alga).